The following is a 281-amino-acid chain: Protein NipSnap homolog 2 (281 aa).

Residues 1-27 constitute a mitochondrion transit peptide; sequence MAARVLLARGGLLRPAAQSAFLPGLRT.

Belongs to the NipSnap family. Interacts with CALCOCO2/NDP52, NBR1, SQSTM1/p62, TAX1BP1 and WDFY3/ALFY. Interacts with ATG8 family proteins (MAP1LC3A, MAP1LC3B, MAP1LC3C, GABARAP, GABARAPL1 and GABARAPL2). Interacts with VDAC1.

It localises to the mitochondrion matrix. The protein localises to the cytoplasm. Its function is as follows. Protein involved in mitophagy by facilitating recruitment of the autophagy machinery required for clearance of damaged mitochondria. Accumulates on the mitochondria surface in response to mitochondrial depolarization and acts as a 'eat me' signal by recruiting proteins involved in selective autophagy, such as autophagy receptors (CALCOCO2/NDP52, NBR1, SQSTM1/p62, TAX1BP1 and WDFY3/ALFY) and ATG8 family proteins (MAP1LC3A, MAP1LC3B, MAP1LC3C, GABARAP, GABARAPL1 and GABARAPL2). May act as a positive regulator of L-type calcium channels. This Mus musculus (Mouse) protein is Protein NipSnap homolog 2.